A 293-amino-acid polypeptide reads, in one-letter code: sn-glycerol-3-phosphate transport system permease protein UgpA (293 aa).

The next 6 helical transmembrane spans lie at 10–30 (ILPY…FFWP), 72–92 (VTVI…LLLA), 108–128 (MMIM…LFMF), 156–176 (MLLV…LFFV), 204–224 (IVFP…TVYA), and 261–281 (LGSS…LTAF). In terms of domain architecture, ABC transmembrane type-1 spans 66 to 282 (YLNSLKVTVI…VIVIALTAFQ (217 aa)).

This sequence belongs to the binding-protein-dependent transport system permease family. In terms of assembly, the complex is composed of two ATP-binding proteins (UgpC), two transmembrane proteins (UgpA and UgpE) and a solute-binding protein (UgpB).

It localises to the cell inner membrane. Part of the ABC transporter complex UgpBAEC involved in sn-glycerol-3-phosphate (G3P) import. Probably responsible for the translocation of the substrate across the membrane. The protein is sn-glycerol-3-phosphate transport system permease protein UgpA (ugpA) of Agrobacterium fabrum (strain C58 / ATCC 33970) (Agrobacterium tumefaciens (strain C58)).